The sequence spans 215 residues: Probable GTP-binding protein EngB (215 aa).

The EngB-type G domain occupies 30–204; sequence EGLEVAFAGR…QMVLAQWLGL (175 aa). GTP-binding positions include 38 to 45, 64 to 68, 82 to 85, 149 to 152, and 182 to 185; these read GRSNAGKS, GRTQL, DLPG, TKAD, and LFSA. Mg(2+) is bound by residues Ser-45 and Thr-66.

The protein belongs to the TRAFAC class TrmE-Era-EngA-EngB-Septin-like GTPase superfamily. EngB GTPase family. The cofactor is Mg(2+).

Its function is as follows. Necessary for normal cell division and for the maintenance of normal septation. The polypeptide is Probable GTP-binding protein EngB (Pseudomonas aeruginosa (strain ATCC 15692 / DSM 22644 / CIP 104116 / JCM 14847 / LMG 12228 / 1C / PRS 101 / PAO1)).